A 176-amino-acid chain; its full sequence is Adenine phosphoribosyltransferase (176 aa).

Belongs to the purine/pyrimidine phosphoribosyltransferase family. Homodimer.

It is found in the cytoplasm. The enzyme catalyses AMP + diphosphate = 5-phospho-alpha-D-ribose 1-diphosphate + adenine. It participates in purine metabolism; AMP biosynthesis via salvage pathway; AMP from adenine: step 1/1. Functionally, catalyzes a salvage reaction resulting in the formation of AMP, that is energically less costly than de novo synthesis. The protein is Adenine phosphoribosyltransferase of Gluconacetobacter diazotrophicus (strain ATCC 49037 / DSM 5601 / CCUG 37298 / CIP 103539 / LMG 7603 / PAl5).